A 451-amino-acid chain; its full sequence is MFLGEDYLLTNRAAVRLFSEVKDLPIVDPHNHLDAKDIVENKPWNDIWEVEGATDHYVWELMRRCGVPEEYITGSRSNREKWLALAKVFPKFVGNPTYEWIHLDLWRRFNVKKVISEETAEEIWEETKRMLPEMTPQKLLKDMKVEILCTTDDPISTLEYHRKARETIKDVTILPTWRPDRAMNVEKSDWKDYVKKIGEIYNEDTSTLEGFLSALWKSHEHFKEHGCVASDHALLEPSIHFVGEKTARKIHEKVFRGKELDPEEIRDYKAFMMVQFGKMNQETGWVTQLHIGALRDYRDSLLKTLGPDSGGDISTNFLKIAEGLRYFLNEFDGKLKIVLYVLDPTHLPTIATIARAFPNVYIGAPWWFNDSPFGMEMHLKYVASVDLLYNLAGMVTDSRKLLSFGSRTEMFRRVLSSVVGEMVERGQIPIREAKELVKHVCYDGPKALFFG.

Belongs to the metallo-dependent hydrolases superfamily. Uronate isomerase family.

The enzyme catalyses D-glucuronate = D-fructuronate. The catalysed reaction is aldehydo-D-galacturonate = keto-D-tagaturonate. It functions in the pathway carbohydrate metabolism; pentose and glucuronate interconversion. The sequence is that of Uronate isomerase from Thermotoga neapolitana (strain ATCC 49049 / DSM 4359 / NBRC 107923 / NS-E).